The primary structure comprises 626 residues: Janus kinase and microtubule-interacting protein 1 (626 aa).

Positions 1-365 are mediates association with microtubules; it reads MSKKGRSKGE…KIKNLTRENV (365 aa). Coiled coils occupy residues 19 to 254 and 284 to 413; these read VQMA…REAE and ERDV…DDLS. Residues 365–626 are mediates interaction with TYK2 and GABBR1; the sequence is VEMKEKLSAQ…ILFEPKLKFM (262 aa). Ser-382 carries the post-translational modification Phosphoserine. A compositionally biased stretch (polar residues) spans 452–461; the sequence is ETLSETSCNT. The tract at residues 452 to 480 is disordered; the sequence is ETLSETSCNTDRTDRAPATPEEDLDDTTT. The residue at position 470 (Thr-470) is a Phosphothreonine. A coiled-coil region spans residues 490–604; the sequence is QLTREYQALQ…EFRVLELEVR (115 aa).

The protein belongs to the JAKMIP family. In terms of assembly, homodimer. Forms a complex with GABBR1 and KIF5B/kinesin-1. Interacts with JAK1 and TYK2. Post-translationally, phosphorylated.

Its subcellular location is the cytoplasm. It localises to the cytoskeleton. It is found in the membrane. Associates with microtubules and may play a role in the microtubule-dependent transport of the GABA-B receptor. May play a role in JAK1 signaling and regulate microtubule cytoskeleton rearrangements. This Bos taurus (Bovine) protein is Janus kinase and microtubule-interacting protein 1 (JAKMIP1).